Consider the following 698-residue polypeptide: MLPARLPFRLLSLFLRGSAPTAARHGLREPLLERRCAAASSFQHSSSLGRELPYDPVDTEGFGEGGDMQERFLFPEYILDPEPQPTREKQLQELQQQQEEEERQRQQRREERRQQNLRARSREHPVVGHPDPALPPSGVNCSGCGAELHCQDAGVPGYLPREKFLRTAEADGGLARTVCQRCWLLSHHRRALRLQVSREQYLELVSAALRRPGPSLVLYMVDLLDLPDALLPDLPALVGPKQLIVLGNKVDLLPQDAPGYRQRLRERLWEDCARAGLLLAPGHQGPQRPVKDEPQDGENPNPPNWSRTVVRDVRLISAKTGYGVEELISALQRSWRYRGDVYLVGATNAGKSTLFNTLLESDYCTAKGSEAIDRATISPWPGTTLNLLKFPICNPTPYRMFKRHQRLKKDSTQAEEDLSEQEQNQLNVLKKHGYVVGRVGRTFLYSEEQKDNIPFEFDADSLAFDMENDPVMGTHKSTKQVELTAQDVKDAHWFYDTPGITKENCILNLLTEKEVNIVLPTQSIVPRTFVLKPGMVLFLGAIGRIDFLQGNQSAWFTVVASNILPVHITSLDRADALYQKHAGHTLLQIPMGGKERMAGFPPLVAEDIMLKEGLGASEAVADIKFSSAGWVSVTPNFKDRLHLRGYTPEGTVLTVRPPLLPYIVNIKGQRIKKSVAYKTKKPPSLMYNVRKKKGKINV.

Residues 42–66 form a disordered region; that stretch reads FQHSSSLGRELPYDPVDTEGFGEGG. Y77 is subject to Phosphotyrosine. 2 disordered regions span residues 80 to 134 and 279 to 306; these read DPEP…DPAL and LAPG…PNWS. The span at 102–126 shows a compositional bias: basic and acidic residues; the sequence is ERQRQQRREERRQQNLRARSREHPV. In terms of domain architecture, CP-type G spans 202 to 503; that stretch reads LELVSAALRR…FYDTPGITKE (302 aa).

The protein belongs to the TRAFAC class YlqF/YawG GTPase family. NOA1 subfamily. As to quaternary structure, homodimer or multimer. Interacts with mitochondrial complex I, DAP3, MRPL12 and MRPS27.

It localises to the mitochondrion inner membrane. In terms of biological role, involved in regulation of mitochondrial protein translation and respiration. Plays a role in mitochondria-mediated cell death. May act as a scaffolding protein or stabilizer of respiratory chain supercomplexes. Binds GTP. This chain is Nitric oxide-associated protein 1 (NOA1), found in Homo sapiens (Human).